Reading from the N-terminus, the 700-residue chain is Elongation factor G (700 aa).

A tr-type G domain is found at 10-286; that stretch reads KKVRNIGIMA…AVIDYLPSPL (277 aa). GTP-binding positions include 19-26, 83-87, and 137-140; these read AHIDAGKT, DTPGH, and NKMD.

It belongs to the TRAFAC class translation factor GTPase superfamily. Classic translation factor GTPase family. EF-G/EF-2 subfamily.

It is found in the cytoplasm. Functionally, catalyzes the GTP-dependent ribosomal translocation step during translation elongation. During this step, the ribosome changes from the pre-translocational (PRE) to the post-translocational (POST) state as the newly formed A-site-bound peptidyl-tRNA and P-site-bound deacylated tRNA move to the P and E sites, respectively. Catalyzes the coordinated movement of the two tRNA molecules, the mRNA and conformational changes in the ribosome. This chain is Elongation factor G, found in Nocardia farcinica (strain IFM 10152).